Reading from the N-terminus, the 24-residue chain is Defensin D6 (24 aa).

The protein belongs to the DEFL family. Group IV subfamily. As to expression, distributed in the epidermal cell layer of leaves and in the subepidermal layer region of stems. Not in roots.

Its subcellular location is the secreted. It is found in the cell wall. In terms of biological role, antimicrobial peptide. Active against Fusarium spp., Gram-positive and Gram-negative bacterial pathogens. In Spinacia oleracea (Spinach), this protein is Defensin D6.